The following is a 554-amino-acid chain: Perforin-1 (554 aa).

Positions 1-20 are cleaved as a signal peptide; that stretch reads MAAYLFLLGLFLLLPRPVPA. Cystine bridges form between cysteine 22-cysteine 75, cysteine 30-cysteine 72, and cysteine 101-cysteine 175. In terms of domain architecture, MACPF spans 26-374; it reads TRSECKQNHK…HYVMSRARWR (349 aa). The beta stranded transmembrane segment at 128–148 threads the bilayer; it reads WRAGLDVNPKPEANVHVSVAG. Asparagine 204 carries an N-linked (GlcNAc...) asparagine glycan. 4 disulfide bridges follow: cysteine 241-cysteine 407, cysteine 376-cysteine 392, cysteine 380-cysteine 394, and cysteine 396-cysteine 406. The beta stranded transmembrane segment at 256–278 threads the bilayer; it reads CLSVEAQVSIGAQASVSSEYKAC. Residues 375–407 form the EGF-like domain; it reads DCNRPCRAGQHKSSRDSCQCVCQDSNVTNQDCC. The 119-residue stretch at 395–513 folds into the C2 domain; the sequence is VCQDSNVTNQ…FHEVNCPLNH (119 aa). Residue asparagine 400 is glycosylated (N-linked (GlcNAc...) asparagine). 12 residues coordinate Ca(2+): glycine 428, aspartate 429, threonine 432, aspartate 435, asparagine 454, aspartate 483, alanine 484, aspartate 485, tryptophan 488, aspartate 489, aspartate 490, and aspartate 491. Intrachain disulfides connect cysteine 496/cysteine 509 and cysteine 524/cysteine 533. Asparagine 548 carries N-linked (GlcNAc...) asparagine glycosylation.

This sequence belongs to the complement C6/C7/C8/C9 family. As to quaternary structure, monomer, as soluble protein. Homooligomer; homooligomerizes to form a pore-forming ring. Ca(2+) is required as a cofactor. Post-translationally, N-glycosylated. In terms of tissue distribution, detected in large granular lymphocytes and lymphokine-activated killer cells.

The protein localises to the cytolytic granule. It localises to the secreted. The protein resides in the cell membrane. It is found in the endosome lumen. Its function is as follows. Pore-forming protein that plays a key role in granzyme-mediated programmed cell death, and in defense against virus-infected or neoplastic cells. Can insert into the membrane of target cells in its calcium-bound form, oligomerize and form large pores. Promotes cytolysis and apoptosis of target cells by mediating the passage and uptake of cytotoxic granzymes. Facilitates the delivery of cationic cargo protein, while anionic or neural proteins are not delivered efficiently. Perforin pores allow the release of mature caspase-7 (CASP7) into the extracellular milieu. This chain is Perforin-1 (Prf1), found in Rattus norvegicus (Rat).